Here is a 135-residue protein sequence, read N- to C-terminus: Agouti-signaling protein (135 aa).

The first 22 residues, 1 to 22 (MNILRLLLATLLVCLCLLTAYS), serve as a signal peptide directing secretion. The N-linked (GlcNAc...) asparagine glycan is linked to asparagine 39. The tract at residues 56–101 (NKKSKKISRKEAEKKRSSKKKASMKNVAQPRRPRPPPPAPCVATRD) is disordered. 5 disulfide bridges follow: cysteine 96/cysteine 111, cysteine 103/cysteine 117, cysteine 110/cysteine 128, cysteine 114/cysteine 135, and cysteine 119/cysteine 126. The region spanning 96–135 (CVATRDSCKPPAPACCDPCASCQCRFFRSSCSCRVLNPTC) is the Agouti domain.

The protein localises to the secreted. In terms of biological role, involved in the regulation of melanogenesis. The binding of ASP to MC1R precludes alpha-MSH initiated signaling and thus blocks production of cAMP, leading to a down-regulation of eumelanogenesis (brown/black pigment) and thus increasing synthesis of pheomelanin (yellow/red pigment). The chain is Agouti-signaling protein (ASIP) from Felis catus (Cat).